Reading from the N-terminus, the 134-residue chain is SYSMEHFRWGKPVGKKRRPVKVYPNGAEGESAEAFPLEFXXELARERPEPARGPEGPDEGAATQADLDNGLVAEVEATSAEKKDEGPYKMEHFRWGSPAKDKRYGGFMTSEKSQTPLVTLFKNAIIKNAYKKGH.

An N-acetylserine modification is found at serine 1. Valine amide is present on valine 13. Position 31 is a phosphoserine (serine 31). 2 stretches are compositionally biased toward basic and acidic residues: residues 43-52 and 79-104; these read LARERPEPAR and SAEK…DKRY. A disordered region spans residues 43–107; the sequence is LARERPEPAR…PAKDKRYGGF (65 aa).

The protein belongs to the POMC family. Specific enzymatic cleavages at paired basic residues yield the different active peptides. As to expression, ACTH and MSH are produced by the pituitary gland.

It localises to the secreted. Stimulates the adrenal glands to release cortisol. Functionally, anorexigenic peptide. Increases the pigmentation of skin by increasing melanin production in melanocytes. Its function is as follows. Increases the pigmentation of skin by increasing melanin production in melanocytes. In terms of biological role, endogenous orexigenic opiate. Endogenous opiate. The sequence is that of Pro-opiomelanocortin (POMC) from Loxodonta africana (African elephant).